Reading from the N-terminus, the 448-residue chain is Deoxyguanosinetriphosphate triphosphohydrolase-like protein (448 aa).

The disordered stretch occupies residues 1-26 (MQINSSWQERFLADPPREKDHRPPFR). The segment covering 11–26 (FLADPPREKDHRPPFR) has biased composition (basic and acidic residues). Positions 59–272 (RLTHSLEVAQ…MELADDIAYA (214 aa)) constitute an HD domain.

Belongs to the dGTPase family. Type 2 subfamily.

In Histophilus somni (strain 129Pt) (Haemophilus somnus), this protein is Deoxyguanosinetriphosphate triphosphohydrolase-like protein.